Here is a 529-residue protein sequence, read N- to C-terminus: Zinc metalloproteinase MspA (529 aa).

Residues 1 to 24 form the signal peptide; it reads MHHNYYLSPLAVALALGMVSPAKA. A propeptide spanning residues 25–204 is cleaved from the precursor; it reads ADPILLQNAS…PFVQWNDIKT (180 aa). Histidine 365 lines the Zn(2+) pocket. The active site involves glutamate 366. Positions 369 and 389 each coordinate Zn(2+). The active-site Proton donor is the histidine 451.

Belongs to the peptidase M4 family. Requires Zn(2+) as cofactor.

The sequence is that of Zinc metalloproteinase MspA (mspA) from Legionella longbeachae.